Here is a 177-residue protein sequence, read N- to C-terminus: Dual-action ribosomal maturation protein DarP (177 aa).

The segment covering 1–12 (MKIVGDSEHFKQ) has biased composition (basic and acidic residues). Positions 1 to 26 (MKIVGDSEHFKQPYDSNDEYVSKTED) are disordered.

Belongs to the DarP family.

It is found in the cytoplasm. Functionally, member of a network of 50S ribosomal subunit biogenesis factors which assembles along the 30S-50S interface, preventing incorrect 23S rRNA structures from forming. Promotes peptidyl transferase center (PTC) maturation. This chain is Dual-action ribosomal maturation protein DarP, found in Shewanella oneidensis (strain ATCC 700550 / JCM 31522 / CIP 106686 / LMG 19005 / NCIMB 14063 / MR-1).